A 445-amino-acid chain; its full sequence is Ribosomal protein uS12 methylthiotransferase RimO (445 aa).

Residues 11–121 (PKISFVSLGC…VLDAVHRASP (111 aa)) enclose the MTTase N-terminal domain. The [4Fe-4S] cluster site is built by Cys20, Cys56, Cys85, Cys152, Cys156, and Cys159. One can recognise a Radical SAM core domain in the interval 138–375 (LTPRHYAYLK…MARQQKISAR (238 aa)). Residues 378 to 444 (KRKVGTRQQI…EYDLHGTVAG (67 aa)) enclose the TRAM domain.

The protein belongs to the methylthiotransferase family. RimO subfamily. The cofactor is [4Fe-4S] cluster.

The protein localises to the cytoplasm. It carries out the reaction L-aspartate(89)-[ribosomal protein uS12]-hydrogen + (sulfur carrier)-SH + AH2 + 2 S-adenosyl-L-methionine = 3-methylsulfanyl-L-aspartate(89)-[ribosomal protein uS12]-hydrogen + (sulfur carrier)-H + 5'-deoxyadenosine + L-methionine + A + S-adenosyl-L-homocysteine + 2 H(+). Catalyzes the methylthiolation of an aspartic acid residue of ribosomal protein uS12. The chain is Ribosomal protein uS12 methylthiotransferase RimO from Bradyrhizobium sp. (strain ORS 278).